Reading from the N-terminus, the 103-residue chain is Large ribosomal subunit protein bL21 (103 aa).

It belongs to the bacterial ribosomal protein bL21 family. Part of the 50S ribosomal subunit. Contacts protein L20.

Functionally, this protein binds to 23S rRNA in the presence of protein L20. The chain is Large ribosomal subunit protein bL21 from Paraburkholderia phytofirmans (strain DSM 17436 / LMG 22146 / PsJN) (Burkholderia phytofirmans).